Consider the following 278-residue polypeptide: HTH-type transcriptional activator RhaS (278 aa).

The HTH araC/xylS-type domain maps to 174–272 (NQLMAWLEDH…SWSPREIRQG (99 aa)). 2 DNA-binding regions (H-T-H motif) span residues 191-212 (ETVA…KQHT) and 239-262 (VTDI…RREF).

Binds DNA as a dimer.

It is found in the cytoplasm. Activates expression of the rhaBAD and rhaT operons. This is HTH-type transcriptional activator RhaS from Enterobacter sp. (strain 638).